The primary structure comprises 269 residues: Formamidopyrimidine-DNA glycosylase (269 aa).

Pro-2 acts as the Schiff-base intermediate with DNA in catalysis. Glu-3 functions as the Proton donor in the catalytic mechanism. The active-site Proton donor; for beta-elimination activity is the Lys-57. The DNA site is built by His-90, Arg-109, and Lys-150. The FPG-type zinc-finger motif lies at 235 to 269 (QVYGRKGEPCRICGMPVVGTKHAQRATFYCRQCQK). Arg-259 acts as the Proton donor; for delta-elimination activity in catalysis.

Belongs to the FPG family. In terms of assembly, monomer. The cofactor is Zn(2+).

It catalyses the reaction Hydrolysis of DNA containing ring-opened 7-methylguanine residues, releasing 2,6-diamino-4-hydroxy-5-(N-methyl)formamidopyrimidine.. The enzyme catalyses 2'-deoxyribonucleotide-(2'-deoxyribose 5'-phosphate)-2'-deoxyribonucleotide-DNA = a 3'-end 2'-deoxyribonucleotide-(2,3-dehydro-2,3-deoxyribose 5'-phosphate)-DNA + a 5'-end 5'-phospho-2'-deoxyribonucleoside-DNA + H(+). Involved in base excision repair of DNA damaged by oxidation or by mutagenic agents. Acts as a DNA glycosylase that recognizes and removes damaged bases. Has a preference for oxidized purines, such as 7,8-dihydro-8-oxoguanine (8-oxoG). Has AP (apurinic/apyrimidinic) lyase activity and introduces nicks in the DNA strand. Cleaves the DNA backbone by beta-delta elimination to generate a single-strand break at the site of the removed base with both 3'- and 5'-phosphates. The polypeptide is Formamidopyrimidine-DNA glycosylase (Klebsiella pneumoniae subsp. pneumoniae (strain ATCC 700721 / MGH 78578)).